Here is a 278-residue protein sequence, read N- to C-terminus: Gap junction delta-3 protein (278 aa).

Over 1–24 (MGEWAFLGSLLDAVQLQSPLVGRL) the chain is Cytoplasmic. A helical transmembrane segment spans residues 25 to 45 (WLVIMLIFRILVLATVGGAVF). Over 46-76 (EDEQEEFVCNTLQPGCRQTCYDRAFPVSHYR) the chain is Extracellular. The chain crosses the membrane as a helical span at residues 77–97 (FWLFHILLLSAPPVLFVIYSM). Over 98–136 (HQASKEAGGAQLAPPCARGRAEAPCSPCALRARRARRCY) the chain is Cytoplasmic. A helical membrane pass occupies residues 137–157 (LLSVALRLLAELAFLGGQALL). Residues 158-188 (YGFRVDPHYACAGPPCPHTVDCFVSRPTEKT) are Extracellular-facing. The helical transmembrane segment at 189–209 (VFVVFYFAVGLLSALLSVAEL) threads the bilayer. Residues 210 to 278 (GHLLWKGRQR…LATVRQDLAI (69 aa)) lie on the Cytoplasmic side of the membrane. The segment at 223 to 278 (LPPPPPSPSLPSQRGDPDPFGPPAYAHRSPAGDSEGEGGSGHSKASLATVRQDLAI) is disordered.

It belongs to the connexin family. Delta-type subfamily. In terms of assembly, a connexon is composed of a hexamer of connexins.

It is found in the cell membrane. The protein resides in the cell junction. The protein localises to the gap junction. In terms of biological role, one gap junction consists of a cluster of closely packed pairs of transmembrane channels, the connexons, through which materials of low MW diffuse from one cell to a neighboring cell. In Mus musculus (Mouse), this protein is Gap junction delta-3 protein (Gjd3).